The following is a 1331-amino-acid chain: Beta-mannanase/endoglucanase A (1331 aa).

Residues 1-41 form the signal peptide; sequence MRLKTKIRKKWLSVLCTVVFLLNILFIANVTILPKVGAATS. The tract at residues 42-325 is catalytic (mannanase); the sequence is NDGVVKIDTS…YKTNAIGTSS (284 aa). Glu162 serves as the catalytic Proton donor. Glu257 functions as the Nucleophile in the catalytic mechanism. 3 disordered regions span residues 319–363, 515–566, and 717–780; these read NAIG…TPAT, PSGA…TPAT, and EPSG…PLPT. Over residues 323–335 the composition is skewed to low complexity; it reads TSSTPTPTSTVTP. In terms of domain architecture, CBM3 1 spans 363–516; it reads TSGQIKVLYA…GVLVWGQEPS (154 aa). Pro residues-rich tracts occupy residues 521–541 and 551–561; these read APAPTATPTPTPTVTPTPTVT and TPTPTPTPTPV. One can recognise a CBM3 2 domain in the interval 566-719; the sequence is TGGQIKVLYA…GVLVWGQEPS (154 aa). The segment covering 721–735 has biased composition (low complexity); sequence TTPSPTSTPTVTVTP. Pro residues-rich tracts occupy residues 736 to 756 and 766 to 780; these read TPTPTPTPTPTPTVTPTPTVT and TPTPTPIPTVTPLPT. The tract at residues 781 to 1331 is catalytic (endoglucanase); it reads ISPSPSVVEI…RNLVFMRALV (551 aa).

It in the N-terminal section; belongs to the glycosyl hydrolase 5 (cellulase A) family. In the C-terminal section; belongs to the glycosyl hydrolase 44 (cellulase J) family.

The catalysed reaction is Random hydrolysis of (1-&gt;4)-beta-D-mannosidic linkages in mannans, galactomannans and glucomannans.. It carries out the reaction Endohydrolysis of (1-&gt;4)-beta-D-glucosidic linkages in cellulose, lichenin and cereal beta-D-glucans.. Degradation of hemicelluloses, the second most abundant polysaccharides in nature. Contains two catalytic domains with mannanase and endoglucanase activities. This is Beta-mannanase/endoglucanase A (manA) from Caldicellulosiruptor saccharolyticus (Caldocellum saccharolyticum).